Consider the following 219-residue polypeptide: Probable nicotinate-nucleotide adenylyltransferase (219 aa).

This sequence belongs to the NadD family.

It carries out the reaction nicotinate beta-D-ribonucleotide + ATP + H(+) = deamido-NAD(+) + diphosphate. Its pathway is cofactor biosynthesis; NAD(+) biosynthesis; deamido-NAD(+) from nicotinate D-ribonucleotide: step 1/1. In terms of biological role, catalyzes the reversible adenylation of nicotinate mononucleotide (NaMN) to nicotinic acid adenine dinucleotide (NaAD). The polypeptide is Probable nicotinate-nucleotide adenylyltransferase (Pseudoalteromonas atlantica (strain T6c / ATCC BAA-1087)).